A 377-amino-acid chain; its full sequence is MPKTAFITGANGLSGSAIVEYLCNTTTSDDWGSIIVTSRSPFKSTVMDPRIKFIALDFVNDVSSLVETMKEVCGAVTHAYFCSYLHKDDFAESYTVNKALFENFIAAIDKAAPKLENVTLQTGGKYYNLHVEPVPSPARENDPRRYGPFENFYFTQEDTLAEMQRGKTWSWNVIRPEAIIGANSQPYGLNVALTIAMYFLICRELGSASPMPTNQRYWEGTDDVSYAPLIADLTIFVSTRKSCANEAFNVTNGDYFTWRYMWPRLAASLGAKADSQQCFEKPMPGEGELQLDWSLAEWCKDKRKVWEDLCDRQGLPGAKATFDLAGWAVGDFLYQRTWSATLSVNKARRFGWTGHMDSYQSFVDTFDKFRQLGLIPK.

Positions 89, 121, 226, 266, and 268 each coordinate NADP(+). Y226 functions as the Proton donor in the catalytic mechanism.

The protein belongs to the short-chain dehydrogenases/reductases (SDR) family. Highly divergent.

The enzyme catalyses dehydrogriseofulvin + NADPH + H(+) = griseofulvin + NADP(+). The protein operates within secondary metabolite biosynthesis; terpenoid biosynthesis. Its function is as follows. Short chain dehydrogenase; part of the gene cluster that mediates the biosynthesis of griseofulvin, an important antifungal drug that has been in use for a long time for treating dermatophyte infections. The first step of the pathway is the formation of the heptaketide backbone by gsfA which is initiated by priming with acetyl-CoA, followed by sequential condensations of 6 malonyl-CoA units. The resulting benzophenone can undergo a spontaneous dehydration to form norlichexanthone. However, the true precursor for the griseofulvin biosynthesis is not norlichexanthone, but the heptaketide benzophenone that is O-methylated at 3-OH by gsfB to produce griseophenone D which is further methylated at 9-OH by gsfC to yield griseophenone C. Griseophenone C is then substrate of halogenase gsfI which is responsible for the regio-specific chlorination at the C13 position to form griseophenone B. The cytochrome P450 gsfF catalyzes the coupling of orcinol and phloroglucinol rings in griseophenone B to form desmethyl-dehydrogriseofulvin A which is further methylated at 5-OH by gsfD to yield dehydrogriseofulvin. Finally, gsfE performs stereospecific reduction of enone 18 of dehydrogriseofulvin to afford the final product griseofulvin. In Penicillium aethiopicum, this protein is Short chain dehydrogenase gsfE.